Here is a 203-residue protein sequence, read N- to C-terminus: 2-phospho-L-lactate guanylyltransferase (203 aa).

The protein belongs to the CofC family. Homodimer.

The catalysed reaction is (2S)-2-phospholactate + GTP + H(+) = (2S)-lactyl-2-diphospho-5'-guanosine + diphosphate. The protein operates within cofactor biosynthesis; coenzyme F420 biosynthesis. Functionally, guanylyltransferase that catalyzes the activation of (2S)-2-phospholactate (2-PL) as (2S)-lactyl-2-diphospho-5'-guanosine, via the condensation of 2-PL with GTP. It is involved in the biosynthesis of coenzyme F420, a hydride carrier cofactor. The chain is 2-phospho-L-lactate guanylyltransferase from Halomicrobium mukohataei (strain ATCC 700874 / DSM 12286 / JCM 9738 / NCIMB 13541) (Haloarcula mukohataei).